A 101-amino-acid polypeptide reads, in one-letter code: NADH-quinone oxidoreductase subunit K (101 aa).

The next 3 membrane-spanning stretches (helical) occupy residues 4–24 (VGHYLAVSAVLFTLGVLGIFI), 29–49 (IIVILMAIELILLAVNINLVA), and 65–85 (FVLTVAAGEAAIGLAILVIYF).

The protein belongs to the complex I subunit 4L family. As to quaternary structure, NDH-1 is composed of 14 different subunits. Subunits NuoA, H, J, K, L, M, N constitute the membrane sector of the complex.

The protein localises to the cell inner membrane. The catalysed reaction is a quinone + NADH + 5 H(+)(in) = a quinol + NAD(+) + 4 H(+)(out). Functionally, NDH-1 shuttles electrons from NADH, via FMN and iron-sulfur (Fe-S) centers, to quinones in the respiratory chain. The immediate electron acceptor for the enzyme in this species is believed to be ubiquinone. Couples the redox reaction to proton translocation (for every two electrons transferred, four hydrogen ions are translocated across the cytoplasmic membrane), and thus conserves the redox energy in a proton gradient. This Sphingopyxis alaskensis (strain DSM 13593 / LMG 18877 / RB2256) (Sphingomonas alaskensis) protein is NADH-quinone oxidoreductase subunit K.